Consider the following 400-residue polypeptide: Enoyl-[acyl-carrier-protein] reductase [NADH] 1 (400 aa).

NAD(+) contacts are provided by residues 48–53 (GASSGY), 74–75 (FE), 111–112 (DA), and 139–140 (LA). A substrate-binding site is contributed by Y225. The Proton donor role is filled by Y235. Residues K244 and 273–275 (VVT) contribute to the NAD(+) site.

The protein belongs to the TER reductase family. Monomer.

It carries out the reaction a 2,3-saturated acyl-[ACP] + NAD(+) = a (2E)-enoyl-[ACP] + NADH + H(+). Its pathway is lipid metabolism; fatty acid biosynthesis. Involved in the final reduction of the elongation cycle of fatty acid synthesis (FAS II). Catalyzes the reduction of a carbon-carbon double bond in an enoyl moiety that is covalently linked to an acyl carrier protein (ACP). This is Enoyl-[acyl-carrier-protein] reductase [NADH] 1 from Vibrio vulnificus (strain CMCP6).